Here is a 429-residue protein sequence, read N- to C-terminus: Phosphoribosylamine--glycine ligase (429 aa).

The ATP-grasp domain occupies 109–316 (KDFLARHNIP…LVELCQAAIA (208 aa)). Residue 135-196 (VREKGAPIVV…EEFLDGEEAS (62 aa)) coordinates ATP. The Mg(2+) site is built by glutamate 286 and asparagine 288.

Belongs to the GARS family. Mg(2+) serves as cofactor. It depends on Mn(2+) as a cofactor.

It catalyses the reaction 5-phospho-beta-D-ribosylamine + glycine + ATP = N(1)-(5-phospho-beta-D-ribosyl)glycinamide + ADP + phosphate + H(+). It functions in the pathway purine metabolism; IMP biosynthesis via de novo pathway; N(1)-(5-phospho-D-ribosyl)glycinamide from 5-phospho-alpha-D-ribose 1-diphosphate: step 2/2. The polypeptide is Phosphoribosylamine--glycine ligase (Vibrio cholerae serotype O1 (strain ATCC 39315 / El Tor Inaba N16961)).